The following is a 545-amino-acid chain: Chaperonin GroEL 2 (545 aa).

ATP contacts are provided by residues 29 to 32 (TLGP), 86 to 90 (DGTTT), Gly-413, 479 to 481 (NAA), and Asp-495.

The protein belongs to the chaperonin (HSP60) family. As to quaternary structure, forms a cylinder of 14 subunits composed of two heptameric rings stacked back-to-back. Interacts with the co-chaperonin GroES.

Its subcellular location is the cytoplasm. The enzyme catalyses ATP + H2O + a folded polypeptide = ADP + phosphate + an unfolded polypeptide.. In terms of biological role, together with its co-chaperonin GroES, plays an essential role in assisting protein folding. The GroEL-GroES system forms a nano-cage that allows encapsulation of the non-native substrate proteins and provides a physical environment optimized to promote and accelerate protein folding. The polypeptide is Chaperonin GroEL 2 (Prochlorococcus marinus (strain MIT 9215)).